The primary structure comprises 136 residues: UPF0216 protein PH0358 (136 aa).

It belongs to the UPF0216 family.

This is UPF0216 protein PH0358 from Pyrococcus horikoshii (strain ATCC 700860 / DSM 12428 / JCM 9974 / NBRC 100139 / OT-3).